Consider the following 388-residue polypeptide: MIKNPKVLILTAHYGNGHVQVAKTLEQTFRQKGIKDVIVCDLFGESHPVITDITKYLYLKSYTIGKELYRLFYYGVEKIYDKKIASWYANFGRKRLKLLLQAEKPDIVINTFPIIAVPELKKQTGISIPVYNVLTDFCVHKIWIHREVDRYFVATDHVKKVMVDIGVPAEQIVETGIPIRSSFELKINSDIIYNKYQLCKNKKILLIVAGAHGVLGSVKELCQSFMSVPDLQVVVVCGKNEALKQDLLGLQEKNPDALKVFGYVENIDELFRVTSCMITKPGGITLSEAAALQVPVILYKPVPGQENENAMYFERKGAAVVIRDDSEVFAKTEALLQDDMKLLQMKEAMKSIYRPEPADHIVDTILAENHVEPNHIPIKSPALAQSFT.

This sequence belongs to the glycosyltransferase 28 family. UgtP subfamily.

Its subcellular location is the cell membrane. It catalyses the reaction a 1,2-diacyl-3-O-(beta-D-glucopyranosyl)-sn-glycerol + UDP-alpha-D-glucose = a 1,2-diacyl-3-O-(beta-D-Glc-(1-&gt;6)-beta-D-Glc)-sn-glycerol + UDP + H(+). The enzyme catalyses a 1,2-diacyl-3-O-(beta-D-Glc-(1-&gt;6)-beta-D-Glc)-sn-glycerol + UDP-alpha-D-glucose = a 1,2-diacyl-3-O-(beta-D-Glc-(1-&gt;6)-beta-D-Glc-(1-&gt;6)-beta-D-Glc)-sn-glycerol + UDP + H(+). It carries out the reaction a 1,2-diacyl-sn-glycerol + UDP-alpha-D-glucose = a 1,2-diacyl-3-O-(beta-D-glucopyranosyl)-sn-glycerol + UDP + H(+). The protein operates within glycolipid metabolism; diglucosyl-diacylglycerol biosynthesis. Its function is as follows. Processive glucosyltransferase involved in the biosynthesis of both the bilayer- and non-bilayer-forming membrane glucolipids. Is able to successively transfer up to three glucosyl residues to diacylglycerol (DAG), thereby catalyzing the formation of beta-monoglucosyl-DAG (3-O-(beta-D-glucopyranosyl)-1,2-diacyl-sn-glycerol), beta-diglucosyl-DAG (3-O-(beta-D-glucopyranosyl-beta-(1-&gt;6)-D-glucopyranosyl)-1,2-diacyl-sn-glycerol) and beta-triglucosyl-DAG (3-O-(beta-D-glucopyranosyl-beta-(1-&gt;6)-D-glucopyranosyl-beta-(1-&gt;6)-D-glucopyranosyl)-1,2-diacyl-sn-glycerol). Beta-diglucosyl-DAG is the predominant glycolipid found in Bacillales and is also used as a membrane anchor for lipoteichoic acid (LTA). The protein is Processive diacylglycerol beta-glucosyltransferase of Bacillus cereus (strain ATCC 10987 / NRS 248).